Reading from the N-terminus, the 78-residue chain is Large ribosomal subunit protein bL28 (78 aa).

The protein belongs to the bacterial ribosomal protein bL28 family.

In Escherichia coli O139:H28 (strain E24377A / ETEC), this protein is Large ribosomal subunit protein bL28.